We begin with the raw amino-acid sequence, 217 residues long: Cytidylate kinase (217 aa).

Position 9–17 (G9–S17) interacts with ATP.

It belongs to the cytidylate kinase family. Type 1 subfamily.

It localises to the cytoplasm. The enzyme catalyses CMP + ATP = CDP + ADP. It carries out the reaction dCMP + ATP = dCDP + ADP. The sequence is that of Cytidylate kinase from Mycoplasma pneumoniae (strain ATCC 29342 / M129 / Subtype 1) (Mycoplasmoides pneumoniae).